The primary structure comprises 624 residues: Phosphomethylpyrimidine synthase (624 aa).

The disordered stretch occupies residues S75–L99. Substrate-binding positions include N226, M255, Y284, H320, S340–G342, D381–R384, and E420. Zn(2+) is bound at residue H424. Y447 provides a ligand contact to substrate. H488 lines the Zn(2+) pocket. [4Fe-4S] cluster contacts are provided by C568, C571, and C576.

It belongs to the ThiC family. In terms of assembly, homodimer. [4Fe-4S] cluster serves as cofactor.

It catalyses the reaction 5-amino-1-(5-phospho-beta-D-ribosyl)imidazole + S-adenosyl-L-methionine = 4-amino-2-methyl-5-(phosphooxymethyl)pyrimidine + CO + 5'-deoxyadenosine + formate + L-methionine + 3 H(+). The protein operates within cofactor biosynthesis; thiamine diphosphate biosynthesis. Its function is as follows. Catalyzes the synthesis of the hydroxymethylpyrimidine phosphate (HMP-P) moiety of thiamine from aminoimidazole ribotide (AIR) in a radical S-adenosyl-L-methionine (SAM)-dependent reaction. In Albidiferax ferrireducens (strain ATCC BAA-621 / DSM 15236 / T118) (Rhodoferax ferrireducens), this protein is Phosphomethylpyrimidine synthase.